The primary structure comprises 100 residues: MTPWFLYLIRTADNKLYTGITTDVERRYQQHQSGKGAKALRGKGELTLAFSAPVGDRSLALRAEYRVKQLTKRQKERLVAEGAGFAELLSSLQTPEIKSD.

One can recognise a GIY-YIG domain in the interval 2–77 (TPWFLYLIRT…KQLTKRQKER (76 aa)).

It belongs to the UPF0213 family.

This chain is UPF0213 protein YhbQ, found in Escherichia coli O81 (strain ED1a).